We begin with the raw amino-acid sequence, 183 residues long: MKKALICIDYTNDFVASDGKLTCGEPGRMIEEAIVNLTKEFITNGDYVVLAVDSHDEGDQYHPETRLFPPHNIKGTEGKDLYGKLLPLYQKHEHEPNVYYMEKTRYSAFAGTDLELKLRERQIGELHLAGVCTDICVLHTAVDAYNKGFRIVVHKQAVASFNQEGHAWALSHFANSIGAQVAE.

This sequence belongs to the isochorismatase family.

This is an uncharacterized protein from Bacillus subtilis (strain 168).